Consider the following 106-residue polypeptide: Cytochrome c2 (106 aa).

Residues Cys-19, Cys-22, His-23, and Met-84 each coordinate heme c.

The protein belongs to the cytochrome c family. Post-translationally, binds 1 heme c group covalently per subunit.

This chain is Cytochrome c2, found in Rhodopila globiformis (Rhodopseudomonas globiformis).